A 294-amino-acid chain; its full sequence is Syntaxin-19 (294 aa).

In terms of domain architecture, t-SNARE coiled-coil homology spans 209 to 271; sequence LSEIEQRHKE…NNTKEKFGLA (63 aa).

Belongs to the syntaxin family. In terms of assembly, interacts with EGFR.

It localises to the cell membrane. Its subcellular location is the cytoplasm. Functionally, plays a role in endosomal trafficking of the epidermal growth factor receptor (EGFR). This is Syntaxin-19 (STX19) from Homo sapiens (Human).